A 213-amino-acid chain; its full sequence is Protein MobE (213 aa).

The chain is Protein MobE (mobE) from Acidithiobacillus ferrooxidans (Thiobacillus ferrooxidans).